Here is a 20-residue protein sequence, read N- to C-terminus: Unknown protein NF007 from 2D-PAGE (20 aa).

This is Unknown protein NF007 from 2D-PAGE from Naegleria fowleri (Brain eating amoeba).